Here is a 227-residue protein sequence, read N- to C-terminus: Large ribosomal subunit protein bL25 (227 aa).

The disordered stretch occupies residues 1-22; sequence MAETKTLAAAARHGTGKGAARS.

It belongs to the bacterial ribosomal protein bL25 family. CTC subfamily. Part of the 50S ribosomal subunit; part of the 5S rRNA/L5/L18/L25 subcomplex. Contacts the 5S rRNA. Binds to the 5S rRNA independently of L5 and L18.

Its function is as follows. This is one of the proteins that binds to the 5S RNA in the ribosome where it forms part of the central protuberance. This chain is Large ribosomal subunit protein bL25, found in Methylocella silvestris (strain DSM 15510 / CIP 108128 / LMG 27833 / NCIMB 13906 / BL2).